The chain runs to 178 residues: Putative pre-16S rRNA nuclease (178 aa).

2 stretches are compositionally biased toward basic and acidic residues: residues 1–18 and 50–60; these read MDHAEQGPDRPGVDDPGR and PRSKDRGPDAP. Disordered stretches follow at residues 1–23 and 36–60; these read MDHAEQGPDRPGVDDPGRGRRIG and SDPDGILATPVETVPRSKDRGPDAP.

It belongs to the YqgF nuclease family.

Its subcellular location is the cytoplasm. Could be a nuclease involved in processing of the 5'-end of pre-16S rRNA. The polypeptide is Putative pre-16S rRNA nuclease (Rhodococcus opacus (strain B4)).